Here is a 338-residue protein sequence, read N- to C-terminus: Phenylalanine--tRNA ligase alpha subunit (338 aa).

E252 serves as a coordination point for Mg(2+).

It belongs to the class-II aminoacyl-tRNA synthetase family. Phe-tRNA synthetase alpha subunit type 1 subfamily. As to quaternary structure, tetramer of two alpha and two beta subunits. The cofactor is Mg(2+).

It localises to the cytoplasm. The catalysed reaction is tRNA(Phe) + L-phenylalanine + ATP = L-phenylalanyl-tRNA(Phe) + AMP + diphosphate + H(+). This is Phenylalanine--tRNA ligase alpha subunit from Fusobacterium nucleatum subsp. nucleatum (strain ATCC 25586 / DSM 15643 / BCRC 10681 / CIP 101130 / JCM 8532 / KCTC 2640 / LMG 13131 / VPI 4355).